The chain runs to 300 residues: B1 kinase (300 aa).

The 267-residue stretch at 16 to 282 (WVVGPLIGKG…ITMVNSLTYF (267 aa)) folds into the Protein kinase domain. ATP contacts are provided by residues 22–30 (IGKGGFGSI) and K45. N147 (proton acceptor) is an active-site residue.

Belongs to the protein kinase superfamily. Ser/Thr protein kinase family. Poxviruses subfamily. In terms of assembly, interacts with host JIP1; this interaction increases the amount of MAPK bound to JIP1 and subsequently increases the activity of transcription factors, such as JUN, that respond to these complexes. Interacts with protein OPG198; this interaction inhibits the repressive activity of OPG198 pseudokinase on viral replication factory formation. The cofactor is Mg(2+). In terms of processing, autophosphorylated.

The protein localises to the virion. The protein resides in the host cytoplasm. The catalysed reaction is L-seryl-[protein] + ATP = O-phospho-L-seryl-[protein] + ADP + H(+). The enzyme catalyses L-threonyl-[protein] + ATP = O-phospho-L-threonyl-[protein] + ADP + H(+). Functionally, essential serine/threonine-protein kinase that plays different role in the viral life cycle. Phosphorylates the host small ribosomal protein RACK1 thereby customizing the ribosomes to a state optimal for viral mRNAs (which contain poly-A leaders) but not for host mRNAs. Facilitates viral DNA replication by inhibiting host BANF1, a cellular host defense responsive to foreign DNA. Phosphorylates host BANF1 on serine and threonine residues; this leads to BANF1 relocalization to the cytoplasm, loss of dimerization and impaired DNA binding activity. Indeed, BANF1 activity depends on its DNA-binding property which is blocked by VPK1-mediated phosphorylation. Required for viral intermediate genes expression, probably by inhibiting host BANF1. Modulates cellular responses via host JUN by two different mechanisms, either by direct phosphorylation or by modulation of upstream JIP1-MAPK complexes. Seems to participate in the accumulation/processing of late proteins and thus in virion maturation. In addition, inhibits B12 repressive activity on viral DNA replication via a phosphorylation-dependent mechanism. The chain is B1 kinase (OPG187) from Homo sapiens (Human).